The chain runs to 89 residues: Small ribosomal subunit protein uS15 (89 aa).

Over residues 1-21 the composition is skewed to basic and acidic residues; it reads MAITQERKNQLISEFKTHESD. The disordered stretch occupies residues 1–23; the sequence is MAITQERKNQLISEFKTHESDTG.

This sequence belongs to the universal ribosomal protein uS15 family. In terms of assembly, part of the 30S ribosomal subunit. Forms a bridge to the 50S subunit in the 70S ribosome, contacting the 23S rRNA.

One of the primary rRNA binding proteins, it binds directly to 16S rRNA where it helps nucleate assembly of the platform of the 30S subunit by binding and bridging several RNA helices of the 16S rRNA. In terms of biological role, forms an intersubunit bridge (bridge B4) with the 23S rRNA of the 50S subunit in the ribosome. This chain is Small ribosomal subunit protein uS15, found in Bacillus velezensis (strain DSM 23117 / BGSC 10A6 / LMG 26770 / FZB42) (Bacillus amyloliquefaciens subsp. plantarum).